We begin with the raw amino-acid sequence, 246 residues long: Putative 4'-phosphopantetheinyl transferase slr0495 (246 aa).

Asp-110 and Glu-156 together coordinate Mg(2+).

This sequence belongs to the P-Pant transferase superfamily. Gsp/Sfp/HetI/AcpT family. Mg(2+) is required as a cofactor.

Functionally, probably transfers the 4'-phosphopantetheine moiety from coenzyme A (CoA) to a serine residue of a carrier protein domain. This chain is Putative 4'-phosphopantetheinyl transferase slr0495, found in Synechocystis sp. (strain ATCC 27184 / PCC 6803 / Kazusa).